We begin with the raw amino-acid sequence, 119 residues long: Large ribosomal subunit protein bL20 (119 aa).

It belongs to the bacterial ribosomal protein bL20 family.

Its function is as follows. Binds directly to 23S ribosomal RNA and is necessary for the in vitro assembly process of the 50S ribosomal subunit. It is not involved in the protein synthesizing functions of that subunit. This chain is Large ribosomal subunit protein bL20, found in Gloeobacter violaceus (strain ATCC 29082 / PCC 7421).